Consider the following 283-residue polypeptide: Phosphatidylglycerol--prolipoprotein diacylglyceryl transferase (283 aa).

7 consecutive transmembrane segments (helical) span residues 21-41, 60-80, 95-115, 124-144, 176-196, 203-223, and 239-259; these read LAIR…LWLA, LLFA…VLFY, VWTG…AMLW, FFTI…AGRL, SQLY…NWFI, GAVS…VEYV, and MGQI…VWAF. An a 1,2-diacyl-sn-glycero-3-phospho-(1'-sn-glycerol)-binding site is contributed by arginine 143.

Belongs to the Lgt family.

The protein resides in the cell inner membrane. The catalysed reaction is L-cysteinyl-[prolipoprotein] + a 1,2-diacyl-sn-glycero-3-phospho-(1'-sn-glycerol) = an S-1,2-diacyl-sn-glyceryl-L-cysteinyl-[prolipoprotein] + sn-glycerol 1-phosphate + H(+). The protein operates within protein modification; lipoprotein biosynthesis (diacylglyceryl transfer). Catalyzes the transfer of the diacylglyceryl group from phosphatidylglycerol to the sulfhydryl group of the N-terminal cysteine of a prolipoprotein, the first step in the formation of mature lipoproteins. This Aliivibrio salmonicida (strain LFI1238) (Vibrio salmonicida (strain LFI1238)) protein is Phosphatidylglycerol--prolipoprotein diacylglyceryl transferase.